The primary structure comprises 151 residues: Snaclec 3 (151 aa).

An N-terminal signal peptide occupies residues 1–23; it reads MGRLVFVSFSLLVVFLSLSGTAA. Disulfide bonds link Cys-25-Cys-36, Cys-53-Cys-149, and Cys-125-Cys-141. The C-type lectin domain occupies 32-150; that stretch reads YEGHCYKPFN…CGEINPFVCK (119 aa).

Belongs to the snaclec family. Heterodimer; disulfide-linked. As to expression, expressed by the venom gland.

The protein resides in the secreted. In terms of biological role, interferes with one step of hemostasis (modulation of platelet aggregation, or coagulation cascade, for example). The chain is Snaclec 3 from Sistrurus catenatus edwardsii (Desert massasauga).